Consider the following 119-residue polypeptide: Holo-[acyl-carrier-protein] synthase (119 aa).

Positions 8 and 58 each coordinate Mg(2+).

Belongs to the P-Pant transferase superfamily. AcpS family. Requires Mg(2+) as cofactor.

The protein localises to the cytoplasm. It carries out the reaction apo-[ACP] + CoA = holo-[ACP] + adenosine 3',5'-bisphosphate + H(+). Functionally, transfers the 4'-phosphopantetheine moiety from coenzyme A to a Ser of acyl-carrier-protein. The chain is Holo-[acyl-carrier-protein] synthase from Bacillus cytotoxicus (strain DSM 22905 / CIP 110041 / 391-98 / NVH 391-98).